The primary structure comprises 525 residues: GMP synthase [glutamine-hydrolyzing] (525 aa).

The Glutamine amidotransferase type-1 domain occupies 9–207 (RILILDFGSQ…VLQLCACEKL (199 aa)). Cys-86 serves as the catalytic Nucleophile. Catalysis depends on residues His-181 and Glu-183. The region spanning 208-400 (WTPANIVEDA…LGLPYDMVYR (193 aa)) is the GMPS ATP-PPase domain. ATP is bound at residue 235–241 (SGGVDSS).

In terms of assembly, homodimer.

The catalysed reaction is XMP + L-glutamine + ATP + H2O = GMP + L-glutamate + AMP + diphosphate + 2 H(+). It functions in the pathway purine metabolism; GMP biosynthesis; GMP from XMP (L-Gln route): step 1/1. In terms of biological role, catalyzes the synthesis of GMP from XMP. The sequence is that of GMP synthase [glutamine-hydrolyzing] from Cellvibrio japonicus (strain Ueda107) (Pseudomonas fluorescens subsp. cellulosa).